The following is a 561-amino-acid chain: Probable xyloglucan galactosyltransferase GT20 (561 aa).

The Cytoplasmic portion of the chain corresponds to 1 to 31 (MVSKRKSRTSKTIEDSCIHLCSVFFRFLYYT). The helical; Signal-anchor for type II membrane protein transmembrane segment at 32–52 (LPALFLFFFLLYLCLSFTTGI) threads the bilayer. The Lumenal portion of the chain corresponds to 53–561 (SYNNFHMCIF…LLKKINRSVV (509 aa)). N-linked (GlcNAc...) asparagine glycans are attached at residues asparagine 87, asparagine 253, asparagine 277, asparagine 418, asparagine 421, and asparagine 557.

The protein belongs to the glycosyltransferase 47 family. Expressed in hydathodes.

The protein resides in the golgi apparatus membrane. In terms of biological role, functions in xyloglucan synthesis by adding side chains to the xylosylated glucan backbone. Involved in the galactosylation of hemicellulose xyloglucan. The sequence is that of Probable xyloglucan galactosyltransferase GT20 from Arabidopsis thaliana (Mouse-ear cress).